The sequence spans 74 residues: Peptide BmKa2 (74 aa).

Residues 1–24 (MSSKTLLVLLLVGVLVSTFFTADA) form the signal peptide.

Belongs to the non-disulfide-bridged peptide (NDBP) superfamily. Long chain multifunctional peptide (group 2) family. In terms of tissue distribution, expressed by the venom gland.

The protein resides in the secreted. Functionally, highly acidic peptide that may have antibacterial activity. This Olivierus martensii (Manchurian scorpion) protein is Peptide BmKa2.